The chain runs to 586 residues: A-type ATP synthase subunit A (586 aa).

Position 238-245 (238-245 (GPFGSGKT)) interacts with ATP.

The protein belongs to the ATPase alpha/beta chains family. Has multiple subunits with at least A(3), B(3), C, D, E, F, H, I and proteolipid K(x).

It is found in the cell membrane. It catalyses the reaction ATP + H2O + 4 H(+)(in) = ADP + phosphate + 5 H(+)(out). Component of the A-type ATP synthase that produces ATP from ADP in the presence of a proton gradient across the membrane. The A chain is the catalytic subunit. In Haloferax volcanii (strain ATCC 29605 / DSM 3757 / JCM 8879 / NBRC 14742 / NCIMB 2012 / VKM B-1768 / DS2) (Halobacterium volcanii), this protein is A-type ATP synthase subunit A.